Reading from the N-terminus, the 110-residue chain is MITLDWEKANGLITTVVQDATTKQVLMVAYMNQESLAKTMATGETWFWSRSRKTLWHKGATSGNIQMVKTIAVDCDADTLLVTVDPAGPACHTGHISCFYRHYPEGKDLT.

Asp-74 is a Mg(2+) binding site. Cys-75 lines the Zn(2+) pocket. Residues Asp-76 and Asp-78 each coordinate Mg(2+). 2 residues coordinate Zn(2+): Cys-91 and Cys-98.

It belongs to the PRA-CH family. In terms of assembly, homodimer. Requires Mg(2+) as cofactor. It depends on Zn(2+) as a cofactor.

It localises to the cytoplasm. It catalyses the reaction 1-(5-phospho-beta-D-ribosyl)-5'-AMP + H2O = 1-(5-phospho-beta-D-ribosyl)-5-[(5-phospho-beta-D-ribosylamino)methylideneamino]imidazole-4-carboxamide. Its pathway is amino-acid biosynthesis; L-histidine biosynthesis; L-histidine from 5-phospho-alpha-D-ribose 1-diphosphate: step 3/9. Its function is as follows. Catalyzes the hydrolysis of the adenine ring of phosphoribosyl-AMP. The sequence is that of Phosphoribosyl-AMP cyclohydrolase from Lacticaseibacillus paracasei (strain ATCC 334 / BCRC 17002 / CCUG 31169 / CIP 107868 / KCTC 3260 / NRRL B-441) (Lactobacillus paracasei).